Here is a 407-residue protein sequence, read N- to C-terminus: Heparan-sulfate 6-O-sulfotransferase 1-B (407 aa).

Residues 8–14 (MVERTSK) lie on the Cytoplasmic side of the membrane. Residues 15–35 (FLLIVVGSVFFMLILYQYVAP) form a helical; Signal-anchor for type II membrane protein membrane-spanning segment. Over 36-407 (GVINFGSPHG…DYMNHIINGW (372 aa)) the chain is Lumenal. 92 to 100 (HIQKTGGTT) contacts 3'-phosphoadenylyl sulfate. Substrate-binding positions include 122–123 (KK), Arg139, Trp144, and His149. The active-site Proton acceptor is His149. Residues Arg183 and Ser191 each coordinate 3'-phosphoadenylyl sulfate. Residues His195 and Trp202 each coordinate substrate. Asn262 carries an N-linked (GlcNAc...) asparagine glycan. Residue 315–317 (MQY) participates in 3'-phosphoadenylyl sulfate binding. N-linked (GlcNAc...) asparagine glycosylation occurs at Asn318. Residue 321–322 (RA) participates in 3'-phosphoadenylyl sulfate binding. An N-linked (GlcNAc...) asparagine glycan is attached at Asn329.

It belongs to the sulfotransferase 6 family. As to expression, during early somitogenesis, first expressed in floor plate and somites. During mid-somitogenesis, expressed strongly in somites and more weakly in eye and hindbrain. During late somitogenesis, expressed in eye, hindbrain and posterior somites. At 24 hours post-fertilization (hpf), expressed in lens, forebrain, hindbrain, otic vesicle, anterior spinal cord neurons and posterior somites. At 36 hpf, expressed in the retinal ciliary marginal zone, brain, pancreas and weakly in pectoral fin. At 48 hpf, expressed in the retinal ciliary marginal zone, retinal ganglion cells, rhombomeres, otic vesicle and weakly in pectoral fin.

The protein resides in the membrane. The catalysed reaction is alpha-D-glucosaminyl-[heparan sulfate](n) + 3'-phosphoadenylyl sulfate = 6-sulfo-alpha-D-glucosaminyl-[heparan sulfate](n) + adenosine 3',5'-bisphosphate + H(+). 6-O-sulfation enzyme which catalyzes the transfer of sulfate from 3'-phosphoadenosine 5'-phosphosulfate (PAPS) to position 6 of the N-sulfoglucosamine residue (GlcNS) of heparan sulfate. The sequence is that of Heparan-sulfate 6-O-sulfotransferase 1-B from Danio rerio (Zebrafish).